The primary structure comprises 357 residues: UDP-N-acetylglucosamine--N-acetylmuramyl-(pentapeptide) pyrophosphoryl-undecaprenol N-acetylglucosamine transferase (357 aa).

UDP-N-acetyl-alpha-D-glucosamine-binding positions include 15–17, N124, R165, S194, and Q288; that span reads TGG.

The protein belongs to the glycosyltransferase 28 family. MurG subfamily.

The protein localises to the cell inner membrane. It catalyses the reaction di-trans,octa-cis-undecaprenyl diphospho-N-acetyl-alpha-D-muramoyl-L-alanyl-D-glutamyl-meso-2,6-diaminopimeloyl-D-alanyl-D-alanine + UDP-N-acetyl-alpha-D-glucosamine = di-trans,octa-cis-undecaprenyl diphospho-[N-acetyl-alpha-D-glucosaminyl-(1-&gt;4)]-N-acetyl-alpha-D-muramoyl-L-alanyl-D-glutamyl-meso-2,6-diaminopimeloyl-D-alanyl-D-alanine + UDP + H(+). It participates in cell wall biogenesis; peptidoglycan biosynthesis. Cell wall formation. Catalyzes the transfer of a GlcNAc subunit on undecaprenyl-pyrophosphoryl-MurNAc-pentapeptide (lipid intermediate I) to form undecaprenyl-pyrophosphoryl-MurNAc-(pentapeptide)GlcNAc (lipid intermediate II). In Trichormus variabilis (strain ATCC 29413 / PCC 7937) (Anabaena variabilis), this protein is UDP-N-acetylglucosamine--N-acetylmuramyl-(pentapeptide) pyrophosphoryl-undecaprenol N-acetylglucosamine transferase.